Here is an 89-residue protein sequence, read N- to C-terminus: Defensin-like protein 197 (89 aa).

A signal peptide spans 1-26; the sequence is MKFVSVFLVLFIFFLVVLEAPEKIEA. Intrachain disulfides connect C33-C86, C46-C70, C55-C81, and C59-C83.

Belongs to the DEFL family. Protease inhibitor I18 (RTI/MTI-2) subfamily.

It is found in the secreted. This Arabidopsis thaliana (Mouse-ear cress) protein is Defensin-like protein 197 (ATTI6).